We begin with the raw amino-acid sequence, 273 residues long: Dermonecrotic toxin LvSicTox-alphaIC1ai (273 aa).

Residue histidine 5 is part of the active site. Residues glutamate 25 and aspartate 27 each coordinate Mg(2+). Histidine 41 acts as the Nucleophile in catalysis. Intrachain disulfides connect cysteine 45–cysteine 51 and cysteine 47–cysteine 190. Aspartate 85 is a Mg(2+) binding site.

This sequence belongs to the arthropod phospholipase D family. Class II subfamily. It depends on Mg(2+) as a cofactor. In terms of tissue distribution, expressed by the venom gland.

The protein resides in the secreted. The enzyme catalyses an N-(acyl)-sphingosylphosphocholine = an N-(acyl)-sphingosyl-1,3-cyclic phosphate + choline. The catalysed reaction is an N-(acyl)-sphingosylphosphoethanolamine = an N-(acyl)-sphingosyl-1,3-cyclic phosphate + ethanolamine. It catalyses the reaction a 1-acyl-sn-glycero-3-phosphocholine = a 1-acyl-sn-glycero-2,3-cyclic phosphate + choline. It carries out the reaction a 1-acyl-sn-glycero-3-phosphoethanolamine = a 1-acyl-sn-glycero-2,3-cyclic phosphate + ethanolamine. In terms of biological role, dermonecrotic toxins cleave the phosphodiester linkage between the phosphate and headgroup of certain phospholipids (sphingolipid and lysolipid substrates), forming an alcohol (often choline) and a cyclic phosphate. This toxin acts on sphingomyelin (SM). It may also act on ceramide phosphoethanolamine (CPE), lysophosphatidylcholine (LPC) and lysophosphatidylethanolamine (LPE), but not on lysophosphatidylserine (LPS), and lysophosphatidylglycerol (LPG). It acts by transphosphatidylation, releasing exclusively cyclic phosphate products as second products. Induces dermonecrosis, hemolysis, increased vascular permeability, edema, inflammatory response, and platelet aggregation. This is Dermonecrotic toxin LvSicTox-alphaIC1ai from Loxosceles variegata (Recluse spider).